The sequence spans 543 residues: CBS domain-containing protein CBSCBSPB1 (543 aa).

Residues Met-1 to Gly-35 are disordered. The residue at position 17 (Ser-17) is a Phosphoserine. Residues Lys-23–Gly-35 are compositionally biased toward basic and acidic residues. CBS domains follow at residues Arg-59–Glu-118, Met-125–Glu-183, Ile-225–Ser-285, and Met-293–Thr-350. The tract at residues Leu-372 to Ala-393 is disordered. One can recognise a PB1 domain in the interval Ala-402–Ser-489. A helical transmembrane segment spans residues Ala-518–Leu-538.

The protein resides in the membrane. This Arabidopsis thaliana (Mouse-ear cress) protein is CBS domain-containing protein CBSCBSPB1 (CBSCBSPB1).